The chain runs to 383 residues: Acetylornithine deacetylase (383 aa).

Residue histidine 80 participates in Zn(2+) binding. Residue aspartate 82 is part of the active site. Aspartate 112 serves as a coordination point for Zn(2+). Residue glutamate 144 is part of the active site. Positions 145, 169, and 355 each coordinate Zn(2+).

The protein belongs to the peptidase M20A family. ArgE subfamily. In terms of assembly, homodimer. Zn(2+) serves as cofactor. Requires Co(2+) as cofactor. The cofactor is glutathione.

The protein localises to the cytoplasm. The enzyme catalyses N(2)-acetyl-L-ornithine + H2O = L-ornithine + acetate. It participates in amino-acid biosynthesis; L-arginine biosynthesis; L-ornithine from N(2)-acetyl-L-ornithine (linear): step 1/1. Catalyzes the hydrolysis of the amide bond of N(2)-acetylated L-amino acids. Cleaves the acetyl group from N-acetyl-L-ornithine to form L-ornithine, an intermediate in L-arginine biosynthesis pathway, and a branchpoint in the synthesis of polyamines. The chain is Acetylornithine deacetylase from Escherichia coli (strain SMS-3-5 / SECEC).